The primary structure comprises 340 residues: Ras association domain-containing protein 1 (340 aa).

Serine 2 carries the N-acetylserine modification. Serine 2 carries the phosphoserine modification. The segment at serine 2–arginine 115 is mediates interaction with E4F1. The Phorbol-ester/DAG-type zinc finger occupies glycine 51–cysteine 101. Residues serine 175–leucine 185 are compositionally biased toward low complexity. Residues serine 175–threonine 196 are disordered. The Ras-associating domain maps to arginine 194–serine 288. One can recognise an SARAH domain in the interval glutamate 290 to cysteine 337. Residues glutamate 311–glutamate 314 are MOAP1-binding.

As to quaternary structure, interacts with MAP1S and XPA. Binds to the N-terminal of CDC20 during prometaphase. Binds to STK3/MST2 and STK4/MST1. Recruited to the TNFRSF1A and TNFRSF10A complexes in response to their respective cognate ligand, after internalization. Can self-associate. Part of a complex with MDM2, DAXX, RASSF1 and USP7. Interacts with MOAP1 and E4F1. Interacts with RSSF5 and probably associates with HRAS via a RSSF1 isoform A-RSSF5 heterodimer. Interacts (via C-terminus) with DAXX (via N-terminus); the interaction is independent of MDM2 and TP53. Interacts (via N-terminus) with MDM2 (via C-terminus); the interaction is independent of TP53. Interacts with RAB39A. Interacts with RAB39B; the interaction is weak. In terms of assembly, interacts with ECM2. Interacts with RAB39B; the interaction is strong. Does not interact with RAB39A.

It localises to the cytoplasm. It is found in the cytoskeleton. The protein localises to the microtubule organizing center. Its subcellular location is the centrosome. The protein resides in the spindle. It localises to the spindle pole. It is found in the nucleus. Its function is as follows. Potential tumor suppressor. Required for death receptor-dependent apoptosis. Mediates activation of Mediates activation of STK3/MST2 and STK4/MST1 during Fas-induced apoptosis by preventing their dephosphorylation. When associated with MOAP1, promotes BAX conformational change and translocation to mitochondrial membranes in response to TNF and TNFSF10 stimulation. Isoform A interacts with CDC20, an activator of the anaphase-promoting complex, APC, resulting in the inhibition of APC activity and mitotic progression. Inhibits proliferation by negatively regulating cell cycle progression at the level of G1/S-phase transition by regulating accumulation of cyclin D1 protein. Isoform C has been shown not to perform these roles, no function has been identified for this isoform. Isoform A disrupts interactions among MDM2, DAXX and USP7, thus contributing to the efficient activation of TP53 by promoting MDM2 self-ubiquitination in cell-cycle checkpoint control in response to DNA damage. In Mus musculus (Mouse), this protein is Ras association domain-containing protein 1.